The sequence spans 150 residues: D-aminoacyl-tRNA deacylase (150 aa).

The Gly-cisPro motif, important for rejection of L-amino acids motif lies at 140–141; that stretch reads GP.

This sequence belongs to the DTD family. In terms of assembly, homodimer.

The protein resides in the cytoplasm. The catalysed reaction is glycyl-tRNA(Ala) + H2O = tRNA(Ala) + glycine + H(+). It catalyses the reaction a D-aminoacyl-tRNA + H2O = a tRNA + a D-alpha-amino acid + H(+). In terms of biological role, an aminoacyl-tRNA editing enzyme that deacylates mischarged D-aminoacyl-tRNAs. Also deacylates mischarged glycyl-tRNA(Ala), protecting cells against glycine mischarging by AlaRS. Acts via tRNA-based rather than protein-based catalysis; rejects L-amino acids rather than detecting D-amino acids in the active site. By recycling D-aminoacyl-tRNA to D-amino acids and free tRNA molecules, this enzyme counteracts the toxicity associated with the formation of D-aminoacyl-tRNA entities in vivo and helps enforce protein L-homochirality. The polypeptide is D-aminoacyl-tRNA deacylase (DTD1) (Kluyveromyces lactis (strain ATCC 8585 / CBS 2359 / DSM 70799 / NBRC 1267 / NRRL Y-1140 / WM37) (Yeast)).